The chain runs to 130 residues: MSQAQYAGTGRRKNAVARVRLVPGTGKITVNKKDVEEYIPHADLRLVINQPFAVTSTAGSYDVFVNVVGGGYAGQAGAIRHGIARALLQVDPDFRDSLKRAGLLTRDSRKVERKKPGLKKARKASQFSKR.

The interval 107–130 (DSRKVERKKPGLKKARKASQFSKR) is disordered. Over residues 111-130 (VERKKPGLKKARKASQFSKR) the composition is skewed to basic residues.

Belongs to the universal ribosomal protein uS9 family.

This is Small ribosomal subunit protein uS9 from Streptococcus sanguinis (strain SK36).